The primary structure comprises 572 residues: Proline--tRNA ligase (572 aa).

The protein belongs to the class-II aminoacyl-tRNA synthetase family. ProS type 1 subfamily. In terms of assembly, homodimer.

It is found in the cytoplasm. It catalyses the reaction tRNA(Pro) + L-proline + ATP = L-prolyl-tRNA(Pro) + AMP + diphosphate. Catalyzes the attachment of proline to tRNA(Pro) in a two-step reaction: proline is first activated by ATP to form Pro-AMP and then transferred to the acceptor end of tRNA(Pro). As ProRS can inadvertently accommodate and process non-cognate amino acids such as alanine and cysteine, to avoid such errors it has two additional distinct editing activities against alanine. One activity is designated as 'pretransfer' editing and involves the tRNA(Pro)-independent hydrolysis of activated Ala-AMP. The other activity is designated 'posttransfer' editing and involves deacylation of mischarged Ala-tRNA(Pro). The misacylated Cys-tRNA(Pro) is not edited by ProRS. This chain is Proline--tRNA ligase, found in Edwardsiella ictaluri (strain 93-146).